Here is a 444-residue protein sequence, read N- to C-terminus: Glutamate--tRNA ligase 1 (444 aa).

The 'HIGH' region motif lies at 10 to 20; the sequence is PSPTGRLHLGN. Residues 241 to 245 carry the 'KMSKS' region motif; it reads GLSKR. ATP is bound at residue Lys-244.

Belongs to the class-I aminoacyl-tRNA synthetase family. Glutamate--tRNA ligase type 1 subfamily. In terms of assembly, monomer.

It is found in the cytoplasm. The catalysed reaction is tRNA(Glu) + L-glutamate + ATP = L-glutamyl-tRNA(Glu) + AMP + diphosphate. In terms of biological role, catalyzes the attachment of glutamate to tRNA(Glu) in a two-step reaction: glutamate is first activated by ATP to form Glu-AMP and then transferred to the acceptor end of tRNA(Glu). In Rhodospirillum rubrum (strain ATCC 11170 / ATH 1.1.1 / DSM 467 / LMG 4362 / NCIMB 8255 / S1), this protein is Glutamate--tRNA ligase 1.